The sequence spans 567 residues: Sporulation-specific protein 5 (567 aa).

Over residues 1–18 (MNGIITPQKQKQLMSSPS) the composition is skewed to polar residues. Disordered regions lie at residues 1–39 (MNGIITPQKQKQLMSSPSRDPLSTTELSTPTSQTTVDVN) and 52–76 (ILLTPGTSPNATPGSSELGLSKKPN). Over residues 21–35 (PLSTTELSTPTSQTT) the composition is skewed to low complexity. A compositionally biased stretch (polar residues) spans 56 to 66 (PGTSPNATPGS). 2 consecutive RRM domains span residues 296-380 (RNVY…SLQD) and 384-462 (TNLY…FADS).

It is found in the cytoplasm. Its function is as follows. RNA-binding protein which plays a role in sporulation. Regulates the progression of meiosis I and may function in the vicinity of the Mei2 dot. This chain is Sporulation-specific protein 5 (spo5), found in Schizosaccharomyces pombe (strain 972 / ATCC 24843) (Fission yeast).